The primary structure comprises 214 residues: uncharacterized protein (214 aa).

In terms of domain architecture, Response regulatory spans Lys-2–Gly-118. Asp-53 is subject to 4-aspartylphosphate. The HTH luxR-type domain occupies Glu-142–Asn-207. The segment at residues Asn-166–Ser-185 is a DNA-binding region (H-T-H motif).

Post-translationally, phosphorylated by YhcY.

Its subcellular location is the cytoplasm. Functionally, member of the two-component regulatory system YhcY/YhcZ. This is an uncharacterized protein from Bacillus subtilis (strain 168).